The sequence spans 166 residues: Protein TIFY 11e (166 aa).

In terms of domain architecture, Tify spans 65-100; it reads ASSAAAQMTIFYGGRVLVLDECPADRAAALLRLAAS. Positions 123 to 148 match the Jas motif; it reads PVARKASLQRFMEKRKGRLAARGQPY. The short motif at 125 to 132 is the Nuclear localization signal element; that stretch reads ARKASLQR.

This sequence belongs to the TIFY/JAZ family. Post-translationally, ubiquitinated. Targeted for degradation by the SCF(COI1) E3 ubiquitin ligase-proteasome pathway during jasmonate signaling.

The protein resides in the nucleus. Its function is as follows. Repressor of jasmonate responses. In Oryza sativa subsp. japonica (Rice), this protein is Protein TIFY 11e.